A 1154-amino-acid chain; its full sequence is MINRDNKKAITKKGMISNRLNKFSIRKYTVGTASILVGTTLIFGLGNQEAKAAENTSTENAKQDDATTSDNKEVVSETENNSTTENNSTNPIKKETNTDSQPEAKKESTSSSTQKQQNNVTATTETKPQNIEKENVKPSTDKTATEDTSVILEEKKAPNNTNNDVTTKPSTSEPSTSEIQTKPTTPQESTNIENSQPQPTPSKVDNQVTDATNPKEPVNVSKEELKNNPEKLKELVRNDSNTDHSTKPVATAPTSVAPKRVNAKMRFAVAQPAAVASNNVNDLIKVTKQTIKVGDGKDNVAAAHDGKDIEYDTEFTIDNKVKKGDTMTINYDKNVIPSDLTDKNDPIDITDPSGEVIAKGTFDKATKQITYTFTDYVDKYEDIKSRLTLYSYIDKKTVPNETSLNLTFATAGKETSQNVTVDYQDPMVHGDSNIQSIFTKLDEDKQTIEQQIYVNPLKKSATNTKVDIAGSQVDDYGNIKLGNGSTIIDQNTEIKVYKVNSDQQLPQSNRIYDFSQYEDVTSQFDNKKSFSNNVATLDFGDINSAYIIKVVSKYTPTSDGELDIAQGTSMRTTDKYGYYNYAGYSNFIVTSNDTGGGDGTVKPEEKLYKIGDYVWEDVDKDGVQGTDSKEKPMANVLVTLTYPDGTTKSVRTDANGHYEFGGLKDGETYTVKFETPTGYLPTKVNGTTDGEKDSNGSSVTVKINGKDDMSLDTGFYKEPKYNLGDYVWEDTNKDGIQDANEPGIKDVKVTLKDSTGKVIGTTTTDASGKYKFTDLDNGNYTVEFETPAGYTPTVKNTTADDKDSNGLTTTGVIKDADNMTLDSGFYKTPKYSLGDYVWYDSNKDGKQDSTEKGIKDVTVTLQNEKGEVIGTTKTDENGKYRFDNLDSGKYKVIFEKPAGLTQTVTNTTEDDKDADGGEVDVTITDHDDFTLDNGYFEEDTSDSDSDSDSDSDSDSDSDSDSDSDSDSDSDSDSDSDSDSDSDSDSDSDSDSDSDSDSDSDSDSDSDSDSDSDSDSDSDSDSDSDSDSDSDSDSDSDSDSDSDSDSDSDSDSDSDSDSDSDSDSDSDSDSDSDSDSDSDSDSDSDSDSDSDSDSDAGKHTPVKPMSTTKDHHNKAKALPETGSENNGSNNATLFGGLFAALGSLLLFGRRKKQNK.

An N-terminal signal peptide occupies residues 1–52; sequence MINRDNKKAITKKGMISNRLNKFSIRKYTVGTASILVGTTLIFGLGNQEAKA. The YSIRK-G/S signaling motif signature appears at 23–34; it reads FSIRKYTVGTAS. Residues 53–606 form a ligand binding A region region; sequence AENTSTENAK…GDGTVKPEEK (554 aa). The disordered stretch occupies residues 54-230; the sequence is ENTSTENAKQ…SKEELKNNPE (177 aa). Positions 61–75 are enriched in basic and acidic residues; the sequence is AKQDDATTSDNKEVV. The segment covering 77–90 has biased composition (low complexity); sequence ETENNSTTENNSTN. A compositionally biased stretch (basic and acidic residues) spans 92 to 108; sequence IKKETNTDSQPEAKKES. The segment covering 118–129 has biased composition (polar residues); sequence NNVTATTETKPQ. Residues 130 to 145 are compositionally biased toward basic and acidic residues; that stretch reads NIEKENVKPSTDKTAT. The span at 166–178 shows a compositional bias: low complexity; it reads TTKPSTSEPSTSE. Positions 179–212 are enriched in polar residues; sequence IQTKPTTPQESTNIENSQPQPTPSKVDNQVTDAT. Basic and acidic residues predominate over residues 221–230; it reads SKEELKNNPE. 3 consecutive CNA-B domains span residues 607 to 719, 720 to 829, and 830 to 940; these read LYKI…YKEP, KYNL…YKTP, and KYSL…EEDT. Residues 904–1129 form a disordered region; the sequence is VTNTTEDDKD…TGSENNGSNN (226 aa). Composition is skewed to acidic residues over residues 908–918 and 935–1093; these read TEDDKDADGGE and YFEE…DSDS. The LPXTG sorting signal motif lies at 1117-1121; sequence LPETG. Thr-1120 is subject to Pentaglycyl murein peptidoglycan amidated threonine. The propeptide at 1121 to 1154 is removed by sortase; sequence GSENNGSNNATLFGGLFAALGSLLLFGRRKKQNK.

It belongs to the serine-aspartate repeat-containing protein (SDr) family. Interacts with host complement factor H/CFAH (via C-terminus). Interacts with host complement regulator C4BPA.

It is found in the secreted. Its subcellular location is the cell wall. In terms of biological role, cell surface-associated calcium-binding protein which plays an important role in adhesion and pathogenesis. Contributes to the resistance to killing by innate immune components in blood and thus attenuates bacterial clearance by interacting with host complement factor H/CFAH and modulating its activity. Also inhibits bacterial opsonization and killing by interacting with host complement regulator C4BPA and thus inhibiting classical complement pathway activation. The polypeptide is Serine-aspartate repeat-containing protein E (sdrE) (Staphylococcus aureus (strain USA300)).